The following is a 102-amino-acid chain: Protein translation factor SUI1 homolog (102 aa).

Belongs to the SUI1 family.

In Nitrosopumilus maritimus (strain SCM1), this protein is Protein translation factor SUI1 homolog.